A 259-amino-acid polypeptide reads, in one-letter code: Adenylosuccinate synthetase (259 aa).

GTP is bound by residues 3–9 (GDEGKGK) and 31–33 (GHT). Asp-4 functions as the Proton acceptor in the catalytic mechanism. Mg(2+) is bound by residues Asp-4 and Gly-31. An IMP-binding site is contributed by 4–7 (DEGK). Catalysis depends on His-32, which acts as the Proton donor. Thr-120, Arg-134, Gln-215, and Thr-230 together coordinate IMP.

This sequence belongs to the adenylosuccinate synthetase family. As to quaternary structure, homodimer. Mg(2+) is required as a cofactor.

It is found in the cytoplasm. The enzyme catalyses IMP + L-aspartate + GTP = N(6)-(1,2-dicarboxyethyl)-AMP + GDP + phosphate + 2 H(+). The protein operates within purine metabolism; AMP biosynthesis via de novo pathway; AMP from IMP: step 1/2. Functionally, plays an important role in the de novo pathway of purine nucleotide biosynthesis. Catalyzes the first committed step in the biosynthesis of AMP from IMP. This chain is Adenylosuccinate synthetase, found in Aggregatibacter actinomycetemcomitans (Actinobacillus actinomycetemcomitans).